Consider the following 343-residue polypeptide: Vacuolar membrane protein Kpol_1003p17 (343 aa).

The tract at residues 45-65 (TTDTSGTSTSSRDVSSGQSTL) is disordered. The helical transmembrane segment at 101-121 (FIAVGSIIGGIFGGVLIWWMI) threads the bilayer. The tract at residues 235-343 (EVLQQQRQRR…YLDDMLENDN (109 aa)) is disordered. Over residues 254–264 (ELPSTPPSNFK) the composition is skewed to polar residues. Residues 269-280 (KPERSASPERKS) are compositionally biased toward basic and acidic residues. A compositionally biased stretch (basic residues) spans 281-290 (RSPIRQHRKN).

The protein belongs to the PRM5 family.

The protein localises to the vacuole membrane. This is Vacuolar membrane protein Kpol_1003p17 from Vanderwaltozyma polyspora (strain ATCC 22028 / DSM 70294 / BCRC 21397 / CBS 2163 / NBRC 10782 / NRRL Y-8283 / UCD 57-17) (Kluyveromyces polysporus).